A 183-amino-acid polypeptide reads, in one-letter code: Interleukin-24 (183 aa).

The first 28 residues, M1–G28, serve as a signal peptide directing secretion. Cysteines 36 and 83 form a disulfide. The N-linked (GlcNAc...) asparagine glycan is linked to N76. K99 participates in a covalent cross-link: Glycyl lysine isopeptide (Lys-Gly) (interchain with G-Cter in ubiquitin).

This sequence belongs to the IL-10 family. Glycosylated. Post-translationally, ubiquitination at Lys-99 promotes proteasomal degradation.

It is found in the secreted. Its function is as follows. Multifunctional cytokine mainly produced by T-cells that plays a regulatory role in immune response, tissue homeostasis, host defense, and oncogenesis. Possesses antiviral functions and induces the type I interferon response during influenza infection. Signals through two receptor complexes IL20RA/IL20RB or IL20RB/IL22RA1. In turn, stimulates the JAK1-STAT3 and MAPK pathways and promotes the secretion of pro-inflammatory mediators including IL8 and MMP1. Intracellularly, maintains endoplasmic reticulum homeostasis by restricting the eIF2alpha-CHOP pathway-mediated stress signal. In addition, acts as a quality control mechanism for the ubiquitin proteasome system by alerting the cell to proteasome dysfunction through activation of PKR/EIF2AK2. This Rattus norvegicus (Rat) protein is Interleukin-24 (Il24).